A 202-amino-acid polypeptide reads, in one-letter code: UPF0056 membrane protein PH0214 (202 aa).

Helical transmembrane passes span 5-25, 47-67, 76-96, 104-124, 135-155, and 174-194; these read ILSSALLMLIMIDPSDKILLV, IGFILLLLFAVAGKIILQDIF, VAGGFVLFKIGLEALEGGGMV, ILALAAVPVATPLIAGPAAIT, IIVSIVGTLIAIAITAALMMI, and IIGLFIMAIGAQMMITGAGGI.

Belongs to the UPF0056 (MarC) family.

It localises to the cell membrane. This Pyrococcus horikoshii (strain ATCC 700860 / DSM 12428 / JCM 9974 / NBRC 100139 / OT-3) protein is UPF0056 membrane protein PH0214.